The primary structure comprises 382 residues: Chorismate synthase (382 aa).

The NADP(+) site is built by arginine 39 and arginine 45. Positions 89–113 are disordered; that stretch reads SPEPGGEPRKKALTDARPGHADLTG. The span at 94-108 shows a compositional bias: basic and acidic residues; the sequence is GEPRKKALTDARPGH. Residues 128–130, 246–247, alanine 290, 305–309, and arginine 331 contribute to the FMN site; these read RAS, QA, and KPIAT.

This sequence belongs to the chorismate synthase family. Homotetramer. Requires FMNH2 as cofactor.

It carries out the reaction 5-O-(1-carboxyvinyl)-3-phosphoshikimate = chorismate + phosphate. It functions in the pathway metabolic intermediate biosynthesis; chorismate biosynthesis; chorismate from D-erythrose 4-phosphate and phosphoenolpyruvate: step 7/7. Functionally, catalyzes the anti-1,4-elimination of the C-3 phosphate and the C-6 proR hydrogen from 5-enolpyruvylshikimate-3-phosphate (EPSP) to yield chorismate, which is the branch point compound that serves as the starting substrate for the three terminal pathways of aromatic amino acid biosynthesis. This reaction introduces a second double bond into the aromatic ring system. This is Chorismate synthase from Deinococcus radiodurans (strain ATCC 13939 / DSM 20539 / JCM 16871 / CCUG 27074 / LMG 4051 / NBRC 15346 / NCIMB 9279 / VKM B-1422 / R1).